A 617-amino-acid chain; its full sequence is Dihydroxy-acid dehydratase (617 aa).

A Mg(2+)-binding site is contributed by Asp81. Position 122 (Cys122) interacts with [2Fe-2S] cluster. Mg(2+) is bound by residues Asp123 and Lys124. Lys124 bears the N6-carboxylysine mark. Cys197 contributes to the [2Fe-2S] cluster binding site. Residue Glu494 participates in Mg(2+) binding. The active-site Proton acceptor is Ser520.

It belongs to the IlvD/Edd family. As to quaternary structure, homodimer. Requires [2Fe-2S] cluster as cofactor. Mg(2+) serves as cofactor.

The enzyme catalyses (2R)-2,3-dihydroxy-3-methylbutanoate = 3-methyl-2-oxobutanoate + H2O. It catalyses the reaction (2R,3R)-2,3-dihydroxy-3-methylpentanoate = (S)-3-methyl-2-oxopentanoate + H2O. The protein operates within amino-acid biosynthesis; L-isoleucine biosynthesis; L-isoleucine from 2-oxobutanoate: step 3/4. Its pathway is amino-acid biosynthesis; L-valine biosynthesis; L-valine from pyruvate: step 3/4. Functions in the biosynthesis of branched-chain amino acids. Catalyzes the dehydration of (2R,3R)-2,3-dihydroxy-3-methylpentanoate (2,3-dihydroxy-3-methylvalerate) into 2-oxo-3-methylpentanoate (2-oxo-3-methylvalerate) and of (2R)-2,3-dihydroxy-3-methylbutanoate (2,3-dihydroxyisovalerate) into 2-oxo-3-methylbutanoate (2-oxoisovalerate), the penultimate precursor to L-isoleucine and L-valine, respectively. This Frankia casuarinae (strain DSM 45818 / CECT 9043 / HFP020203 / CcI3) protein is Dihydroxy-acid dehydratase.